The primary structure comprises 122 residues: Large ribosomal subunit protein uL14 (122 aa).

It belongs to the universal ribosomal protein uL14 family. Part of the 50S ribosomal subunit. Forms a cluster with proteins L3 and L19. In the 70S ribosome, L14 and L19 interact and together make contacts with the 16S rRNA in bridges B5 and B8.

Functionally, binds to 23S rRNA. Forms part of two intersubunit bridges in the 70S ribosome. This is Large ribosomal subunit protein uL14 from Desulforudis audaxviator (strain MP104C).